The following is a 269-amino-acid chain: Tryptophan synthase alpha chain (269 aa).

Catalysis depends on proton acceptor residues glutamate 50 and aspartate 61.

This sequence belongs to the TrpA family. Tetramer of two alpha and two beta chains.

The enzyme catalyses (1S,2R)-1-C-(indol-3-yl)glycerol 3-phosphate + L-serine = D-glyceraldehyde 3-phosphate + L-tryptophan + H2O. It participates in amino-acid biosynthesis; L-tryptophan biosynthesis; L-tryptophan from chorismate: step 5/5. Functionally, the alpha subunit is responsible for the aldol cleavage of indoleglycerol phosphate to indole and glyceraldehyde 3-phosphate. This Francisella tularensis subsp. tularensis (strain WY96-3418) protein is Tryptophan synthase alpha chain.